The sequence spans 1464 residues: Glutamate receptor ionotropic, NMDA 2A (1464 aa).

Residues 1–22 form the signal peptide; sequence MGRVGYWTLLVLPALLVWRGPA. Topologically, residues 23–556 are extracellular; it reads PSAAAEKGPP…SAFLEPFSAS (534 aa). Residue His-44 participates in Zn(2+) binding. N-linked (GlcNAc...) asparagine glycosylation is present at Asn-75. An intrachain disulfide couples Cys-87 to Cys-320. Residues His-128, Glu-266, and Asp-282 each contribute to the Zn(2+) site. Asn-340, Asn-380, Asn-443, and Asn-444 each carry an N-linked (GlcNAc...) asparagine glycan. 2 disulfide bridges follow: Cys-429-Cys-455 and Cys-436-Cys-456. Residues Ser-511, Thr-513, and Arg-518 each coordinate L-glutamate. A glycan (N-linked (GlcNAc...) asparagine) is linked at Asn-541. Residues 557 to 576 form a helical membrane-spanning segment; that stretch reads VWVMMFVMLLIVSAIAVFVF. Residues 577–600 are Cytoplasmic-facing; that stretch reads EYFSPVGYNRNLAKGKAPHGPSFT. Positions 599–620 are pore-forming; that stretch reads FTIGKAIWLLWGLVFNNSVPVQ. The segment at residues 601-615 is an intramembrane region (discontinuously helical); sequence IGKAIWLLWGLVFNN. Residues 616–625 lie on the Cytoplasmic side of the membrane; it reads SVPVQNPKGT. The chain crosses the membrane as a helical span at residues 626–646; it reads TSKIMVSVWAFFAVIFLASYT. Residues 647 to 814 are Extracellular-facing; the sequence is ANLAAFMIQE…NEVMSSQLDI (168 aa). Residue Asn-687 is glycosylated (N-linked (GlcNAc...) asparagine). Residues Ser-689, Thr-690, and Asp-731 each coordinate L-glutamate. An intrachain disulfide couples Cys-745 to Cys-800. Residues 815–835 traverse the membrane as a helical segment; it reads DNMAGVFYMLAAAMALSLITF. Topologically, residues 836–1464 are cytoplasmic; sequence IWEHLFYWKL…KKMPSIESDV (629 aa). 3 positions are modified to phosphoserine: Ser-882, Ser-890, and Ser-929. 2 stretches are compositionally biased toward polar residues: residues 1001-1010 and 1023-1032; these read STESKVNSRP and QDSLSQNPVS. 2 disordered regions span residues 1001–1088 and 1148–1180; these read STES…NFKR and PDPYQDPSENLRKGDSTLPMNRNPLQNEEGLSN. At Ser-1025 the chain carries Phosphoserine. Basic and acidic residues-rich tracts occupy residues 1033–1043 and 1052–1061; these read QRDEATAENRT and LPEEMAHSDI. Residues Ser-1059 and Ser-1062 each carry the phosphoserine modification. Basic and acidic residues predominate over residues 1070-1087; the sequence is CHREPDNSKNPKTKDNFK. A compositionally biased stretch (polar residues) spans 1165–1180; the sequence is LPMNRNPLQNEEGLSN. Phosphoserine occurs at positions 1198 and 1291. The segment at 1335 to 1372 is disordered; it reads KLSGKKSSLFPQGLEDSKRSKSLLPDHTSDNPFLHSHR. The short motif at 1462–1464 is the PDZ-binding element; it reads SDV.

This sequence belongs to the glutamate-gated ion channel (TC 1.A.10.1) family. NR2A/GRIN2A subfamily. Heterotetramer. Forms heterotetrameric channels composed of two GluN1/zeta subunits (GRIN1), and two identical GluN2/epsilon subunits (GRIN2A, GRIN2B, GRIN2C or GRIN2D) or GluN3 subunits (GRIN3A or GRIN3B) (in vitro). Can also form heterotetrameric channels that contain at least two GluN1 subunits and at least two different GluN2 subunits (or a combination of one GluN2 and one GluN3 subunits) (in vitro). In vivo, the subunit composition may depend on the expression levels of the different subunits. Found in a complex with GRIN1, GRIN3A and PPP2CB. Found in a complex with GRIN1 and GRIN3B. Interacts with AIP1. Interacts with HIP1 and NETO1. Interacts with SNX27 (via PDZ domain); the interaction is required for recycling to the plasma membrane when endocytosed and prevent degradation in lysosomes. Interacts with PDZ domains of PATJ and DLG4. Interacts with LRFN2. Interacts with RPH3A and DLG4; this ternary complex regulates NMDA receptor composition at postsynaptic membranes. Interacts with SORCS2. Interacts with ARC; preventing ARC oligomerization. Interacts (via the extreme C-terminus) with FRMPD2 (the second PDZ domain); the interaction is direct and is likely to promote NMDAR-mediated neural signal transmission. GRIN2A binds FRMPD2 with lower affinity than GRIN2B.

It localises to the cell projection. Its subcellular location is the dendritic spine. The protein localises to the cell membrane. It is found in the synapse. The protein resides in the postsynaptic cell membrane. It localises to the cytoplasmic vesicle membrane. The enzyme catalyses Ca(2+)(in) = Ca(2+)(out). It carries out the reaction Na(+)(in) = Na(+)(out). It catalyses the reaction K(+)(in) = K(+)(out). In terms of biological role, component of N-methyl-D-aspartate (NMDA) receptors (NMDARs) that function as heterotetrameric, ligand-gated cation channels with high calcium permeability and voltage-dependent block by Mg(2+). NMDARs participate in synaptic plasticity for learning and memory formation by contributing to the slow phase of excitatory postsynaptic current, long-term synaptic potentiation, and learning. Channel activation requires binding of the neurotransmitter L-glutamate to the GluN2 subunit, glycine or D-serine binding to the GluN1 subunit, plus membrane depolarization to eliminate channel inhibition by Mg(2+). NMDARs mediate simultaneously the potasium efflux and the influx of calcium and sodium. Each GluN2 subunit confers differential attributes to channel properties, including activation, deactivation and desensitization kinetics, pH sensitivity, Ca2(+) permeability, and binding to allosteric modulators. Participates in the synaptic plasticity regulation through activation by the L-glutamate releaseed by BEST1, into the synaptic cleft, upon F2R/PAR-1 activation in astrocyte. The protein is Glutamate receptor ionotropic, NMDA 2A of Pan troglodytes (Chimpanzee).